Consider the following 488-residue polypeptide: Proline--tRNA ligase (488 aa).

The protein belongs to the class-II aminoacyl-tRNA synthetase family. ProS type 3 subfamily. Homodimer.

Its subcellular location is the cytoplasm. It carries out the reaction tRNA(Pro) + L-proline + ATP = L-prolyl-tRNA(Pro) + AMP + diphosphate. In terms of biological role, catalyzes the attachment of proline to tRNA(Pro) in a two-step reaction: proline is first activated by ATP to form Pro-AMP and then transferred to the acceptor end of tRNA(Pro). The protein is Proline--tRNA ligase of Pyrobaculum islandicum (strain DSM 4184 / JCM 9189 / GEO3).